The following is a 209-amino-acid chain: Uracil phosphoribosyltransferase (209 aa).

Residues arginine 79, arginine 104, and 131–139 each bind 5-phospho-alpha-D-ribose 1-diphosphate; that span reads DPMLATGGS. Uracil-binding positions include isoleucine 194 and 199 to 201; that span reads GDA. Aspartate 200 serves as a coordination point for 5-phospho-alpha-D-ribose 1-diphosphate.

The protein belongs to the UPRTase family. Requires Mg(2+) as cofactor.

It carries out the reaction UMP + diphosphate = 5-phospho-alpha-D-ribose 1-diphosphate + uracil. It functions in the pathway pyrimidine metabolism; UMP biosynthesis via salvage pathway; UMP from uracil: step 1/1. Allosterically activated by GTP. Functionally, catalyzes the conversion of uracil and 5-phospho-alpha-D-ribose 1-diphosphate (PRPP) to UMP and diphosphate. In Latilactobacillus sakei (Lactobacillus sakei), this protein is Uracil phosphoribosyltransferase.